A 343-amino-acid chain; its full sequence is Cell division protein ZipA (343 aa).

Residues 1-4 are Periplasmic-facing; it reads MDLN. Residues 5 to 25 traverse the membrane as a helical segment; it reads TILIILGILALIGLVAHGIWS. The Cytoplasmic portion of the chain corresponds to 26 to 343; it reads NRREKSQYFD…MAEAAYLARV (318 aa). The disordered stretch occupies residues 39–98; that stretch reads AFHRNPQSTGRPSAQASQPMTPNFAQPAKETEQIRQTYQEPQVRQMSSSPEQQTRPTAQA. Composition is skewed to polar residues over residues 43–62 and 72–95; these read NPQSTGRPSAQASQPMTPNF and IRQTYQEPQVRQMSSSPEQQTRPT.

This sequence belongs to the ZipA family. In terms of assembly, interacts with FtsZ via their C-terminal domains.

It is found in the cell inner membrane. Its function is as follows. Essential cell division protein that stabilizes the FtsZ protofilaments by cross-linking them and that serves as a cytoplasmic membrane anchor for the Z ring. Also required for the recruitment to the septal ring of downstream cell division proteins. This is Cell division protein ZipA from Actinobacillus succinogenes (strain ATCC 55618 / DSM 22257 / CCUG 43843 / 130Z).